The chain runs to 107 residues: Putative protein RFPL3S (107 aa).

As to expression, strongly expressed in the testis and weakly in brain, placenta and pancreas.

This chain is Putative protein RFPL3S (RFPL3S), found in Homo sapiens (Human).